We begin with the raw amino-acid sequence, 298 residues long: HTH-type transcriptional regulator TsaR (298 aa).

The 58-residue stretch at 1–58 (MKLQTLQALICIEEVGSLRAAAQLLHLSQPALSAAIQQLEDELKAPLLVRTKRGVSLT) folds into the HTH lysR-type domain. The H-T-H motif DNA-binding region spans 18–37 (LRAAAQLLHLSQPALSAAIQ). Toluene-4-sulfonate-binding residues include serine 98 and alanine 100.

The protein belongs to the LysR transcriptional regulatory family. Homotetramer. Dimer of dimers related by a twofold axis.

Sensitive to oxygen. In terms of biological role, regulates expression of the tsaMBCD1 operon and of tsaT in response to p-toluenesulfonate (TSA). Acts by binding directly to the promoter region. Binding to the tsa promoter depends on TSA concentration. In Comamonas testosteroni (Pseudomonas testosteroni), this protein is HTH-type transcriptional regulator TsaR (tsaR).